The primary structure comprises 113 residues: Large ribosomal subunit protein uL24 (113 aa).

Belongs to the universal ribosomal protein uL24 family. As to quaternary structure, part of the 50S ribosomal subunit.

Functionally, one of two assembly initiator proteins, it binds directly to the 5'-end of the 23S rRNA, where it nucleates assembly of the 50S subunit. One of the proteins that surrounds the polypeptide exit tunnel on the outside of the subunit. The chain is Large ribosomal subunit protein uL24 from Synechococcus elongatus (strain ATCC 33912 / PCC 7942 / FACHB-805) (Anacystis nidulans R2).